The sequence spans 53 residues: UPF0391 membrane protein SG0393 (53 aa).

2 helical membrane-spanning segments follow: residues 4-24 (WGII…GGLA) and 27-47 (AAWA…ISLF).

This sequence belongs to the UPF0391 family.

Its subcellular location is the cell membrane. The chain is UPF0391 membrane protein SG0393 from Sodalis glossinidius (strain morsitans).